The chain runs to 178 residues: ATP synthase subunit delta (178 aa).

The protein belongs to the ATPase delta chain family. As to quaternary structure, F-type ATPases have 2 components, F(1) - the catalytic core - and F(0) - the membrane proton channel. F(1) has five subunits: alpha(3), beta(3), gamma(1), delta(1), epsilon(1). F(0) has three main subunits: a(1), b(2) and c(10-14). The alpha and beta chains form an alternating ring which encloses part of the gamma chain. F(1) is attached to F(0) by a central stalk formed by the gamma and epsilon chains, while a peripheral stalk is formed by the delta and b chains.

It is found in the cell inner membrane. F(1)F(0) ATP synthase produces ATP from ADP in the presence of a proton or sodium gradient. F-type ATPases consist of two structural domains, F(1) containing the extramembraneous catalytic core and F(0) containing the membrane proton channel, linked together by a central stalk and a peripheral stalk. During catalysis, ATP synthesis in the catalytic domain of F(1) is coupled via a rotary mechanism of the central stalk subunits to proton translocation. Functionally, this protein is part of the stalk that links CF(0) to CF(1). It either transmits conformational changes from CF(0) to CF(1) or is implicated in proton conduction. The chain is ATP synthase subunit delta from Pseudomonas syringae pv. syringae (strain B728a).